Reading from the N-terminus, the 506-residue chain is Dual specificity protein kinase shkC (506 aa).

Residues 1-21 (MDSGLGSSYPEERSGPPEIRP) are disordered. The span at 10–21 (PEERSGPPEIRP) shows a compositional bias: basic and acidic residues. The Protein kinase domain maps to 24–284 (INFEELIGTG…IISALDHVII (261 aa)). Residues 30 to 38 (IGTGSFGKV) and lysine 51 contribute to the ATP site. The Proton acceptor role is filled by aspartate 147. An SH2 domain is found at 396-488 (WFHGDLDTTE…KLDSQLGVPN (93 aa)).

Belongs to the protein kinase superfamily. TKL Ser/Thr protein kinase family. SH2 domain-containing protein kinase subfamily.

The protein localises to the membrane. The catalysed reaction is L-seryl-[protein] + ATP = O-phospho-L-seryl-[protein] + ADP + H(+). It catalyses the reaction L-threonyl-[protein] + ATP = O-phospho-L-threonyl-[protein] + ADP + H(+). Required for proper chemotaxis and phagocytosis; proper spatiotemporal control of F-actin levels in chemotaxing cells. Negative regulator of the PI3K (phosphatidylinositol 3 kinase) pathway. Predominantly phosphorylates serines and threonines and tyrosines at a lower level. This Dictyostelium discoideum (Social amoeba) protein is Dual specificity protein kinase shkC (shkC).